A 74-amino-acid chain; its full sequence is Protein krueppel (74 aa).

C2H2-type zinc fingers lie at residues 1 to 4 (ERTH), 10 to 32 (FECS…MRLH), 38 to 60 (YHCT…LRVH), and 66 to 74 (YACELCASR).

The protein belongs to the krueppel C2H2-type zinc-finger protein family.

The protein resides in the nucleus. Krueppel is a gap class segmentation protein. The polypeptide is Protein krueppel (Kr) (Euscelis plebejus (Leafhopper)).